A 147-amino-acid chain; its full sequence is Large ribosomal subunit protein uL15 (147 aa).

The segment covering 1-13 has biased composition (basic and acidic residues); sequence MRLHDLKPAEGAR. Positions 1–58 are disordered; the sequence is MRLHDLKPAEGARRERKRVGRGIGSGHGKTSGRGQKGQKARSGGGVRPGFEGGQMPLT. 2 stretches are compositionally biased toward gly residues: residues 21 to 35 and 42 to 52; these read RGIG…GRGQ and SGGGVRPGFEG.

This sequence belongs to the universal ribosomal protein uL15 family. In terms of assembly, part of the 50S ribosomal subunit.

Its function is as follows. Binds to the 23S rRNA. The polypeptide is Large ribosomal subunit protein uL15 (Thermoanaerobacter sp. (strain X514)).